A 429-amino-acid polypeptide reads, in one-letter code: UDP-N-acetylglucosamine 1-carboxyvinyltransferase (429 aa).

22-23 contributes to the phosphoenolpyruvate binding site; sequence KN. Residue arginine 102 participates in UDP-N-acetyl-alpha-D-glucosamine binding. The active-site Proton donor is the cysteine 126. Cysteine 126 is subject to 2-(S-cysteinyl)pyruvic acid O-phosphothioketal. Residues 131–135, aspartate 316, and isoleucine 338 each bind UDP-N-acetyl-alpha-D-glucosamine; that span reads RPVDL.

It belongs to the EPSP synthase family. MurA subfamily.

The protein resides in the cytoplasm. The catalysed reaction is phosphoenolpyruvate + UDP-N-acetyl-alpha-D-glucosamine = UDP-N-acetyl-3-O-(1-carboxyvinyl)-alpha-D-glucosamine + phosphate. Its pathway is cell wall biogenesis; peptidoglycan biosynthesis. Its function is as follows. Cell wall formation. Adds enolpyruvyl to UDP-N-acetylglucosamine. This Methylobacterium nodulans (strain LMG 21967 / CNCM I-2342 / ORS 2060) protein is UDP-N-acetylglucosamine 1-carboxyvinyltransferase.